The following is a 427-amino-acid chain: Trigger factor (427 aa).

In terms of domain architecture, PPIase FKBP-type spans 163–248 (GDTVILDFEG…LHEIKTKEVP (86 aa)).

Belongs to the FKBP-type PPIase family. Tig subfamily.

It localises to the cytoplasm. The enzyme catalyses [protein]-peptidylproline (omega=180) = [protein]-peptidylproline (omega=0). In terms of biological role, involved in protein export. Acts as a chaperone by maintaining the newly synthesized protein in an open conformation. Functions as a peptidyl-prolyl cis-trans isomerase. The chain is Trigger factor from Listeria monocytogenes serotype 4a (strain HCC23).